Consider the following 82-residue polypeptide: Defensin-like protein 7 (82 aa).

The first 29 residues, 1–29 (MKSSTTSMQLIPTLFFLTILLASPEMVEG), serve as a signal peptide directing secretion. Gln-30 carries the pyrrolidone carboxylic acid modification. 4 cysteine pairs are disulfide-bonded: Cys-33–Cys-77, Cys-44–Cys-64, Cys-50–Cys-71, and Cys-54–Cys-73.

Belongs to the DEFL family. Expressed in stems, roots, rosette leaves and flower buds.

The protein resides in the secreted. This is Defensin-like protein 7 (LCR75) from Arabidopsis thaliana (Mouse-ear cress).